The primary structure comprises 580 residues: Arginine--tRNA ligase (580 aa).

Positions 137-147 (ANPTGPLHIGH) match the 'HIGH' region motif.

It belongs to the class-I aminoacyl-tRNA synthetase family. As to quaternary structure, monomer.

The protein localises to the cytoplasm. It catalyses the reaction tRNA(Arg) + L-arginine + ATP = L-arginyl-tRNA(Arg) + AMP + diphosphate. This chain is Arginine--tRNA ligase, found in Anaplasma phagocytophilum (strain HZ).